The primary structure comprises 80 residues: Putative membrane protein insertion efficiency factor (80 aa).

It belongs to the UPF0161 family.

The protein localises to the cell inner membrane. In terms of biological role, could be involved in insertion of integral membrane proteins into the membrane. In Kosmotoga olearia (strain ATCC BAA-1733 / DSM 21960 / TBF 19.5.1), this protein is Putative membrane protein insertion efficiency factor.